A 227-amino-acid polypeptide reads, in one-letter code: Probable FKBP-type 25 kDa peptidyl-prolyl cis-trans isomerase (227 aa).

Positions 144–227 (ATQVHVRYRG…VFEIDLLGFR (84 aa)) constitute a PPIase FKBP-type domain.

This sequence belongs to the FKBP-type PPIase family.

The enzyme catalyses [protein]-peptidylproline (omega=180) = [protein]-peptidylproline (omega=0). PPIases accelerate the folding of proteins. The chain is Probable FKBP-type 25 kDa peptidyl-prolyl cis-trans isomerase (fkl) from Pseudomonas aeruginosa (strain ATCC 15692 / DSM 22644 / CIP 104116 / JCM 14847 / LMG 12228 / 1C / PRS 101 / PAO1).